Reading from the N-terminus, the 311-residue chain is Malate dehydrogenase (311 aa).

NAD(+) is bound by residues 7 to 13 and Asp34; that span reads GAAGGIG. Residues Arg81 and Arg87 each coordinate substrate. NAD(+)-binding positions include Asn94 and 117–119; that span reads ITN. Substrate is bound by residues Asn119 and Arg153. The active-site Proton acceptor is the His177. NAD(+) is bound at residue Met227.

Belongs to the LDH/MDH superfamily. MDH type 1 family. In terms of assembly, homodimer.

The catalysed reaction is (S)-malate + NAD(+) = oxaloacetate + NADH + H(+). Catalyzes the reversible oxidation of malate to oxaloacetate. The sequence is that of Malate dehydrogenase from Haemophilus influenzae (strain 86-028NP).